The primary structure comprises 363 residues: 3-dehydroquinate synthase (363 aa).

NAD(+)-binding positions include 74 to 79 (DGEQYK), 108 to 112 (GVIGD), 132 to 133 (TT), K145, K154, and 172 to 175 (CLKT). The Zn(2+) site is built by E187, H250, and H267.

It belongs to the sugar phosphate cyclases superfamily. Dehydroquinate synthase family. Requires NAD(+) as cofactor. The cofactor is Co(2+). Zn(2+) serves as cofactor.

The protein localises to the cytoplasm. The catalysed reaction is 7-phospho-2-dehydro-3-deoxy-D-arabino-heptonate = 3-dehydroquinate + phosphate. It participates in metabolic intermediate biosynthesis; chorismate biosynthesis; chorismate from D-erythrose 4-phosphate and phosphoenolpyruvate: step 2/7. Functionally, catalyzes the conversion of 3-deoxy-D-arabino-heptulosonate 7-phosphate (DAHP) to dehydroquinate (DHQ). The protein is 3-dehydroquinate synthase of Buchnera aphidicola subsp. Acyrthosiphon pisum (strain APS) (Acyrthosiphon pisum symbiotic bacterium).